The chain runs to 488 residues: MASTTTCTRFTDEYQLFEELGKGAFSVVRRCMKIPTGQEYAAKIINTKKLSARDHQKLEREARICRLLKHPNIVRLHDSISEEGFHYLVFDLVTGGELFEDIVAREYYSEADASHCIQQILESVNHCHLNGIVHRDLKPENLLLASKSKGAAVKLADFGLAIEVQGDQQAWFGFAGTPGYLSPEVLRKDPYGKPVDMWACGVILYILLVGYPPFWDEDQHRLYQQIKAGAYDFPSPEWDTVTPEAKDLINKMLTINPAKRITASEALKHPWICQRSTVASMMHRQETVDCLKKFNARRKLKGAILTTMLATRNFSAKSLLKKPDGVKKRKSSSSVQMMESTESSNTTIEDEDVKARKQEIIKVTEQLIEAINNGDFEAYTKICDPGLTAFEPEALGNLVEGMDFHRFYFENALSKSNKPIHTIILNPHVHLVGDDAACIAYIRLTQYMDGSGMPKTMQSEETRVWHRRDGKWQNVHFHRSGSPTVPIN.

Position 2 is an N-acetylalanine (Ala-2). The Protein kinase domain maps to 14–272 (YQLFEELGKG…ASEALKHPWI (259 aa)). ATP is bound by residues 20–28 (LGKGAFSVV) and Lys-43. Asp-136 (proton acceptor) is an active-site residue. The tract at residues 283-292 (HRQETVDCLK) is autoinhibitory domain. At Thr-287 the chain carries Phosphothreonine; by autocatalysis. The segment at 291 to 301 (LKKFNARRKLK) is calmodulin-binding. Thr-306 and Thr-307 each carry phosphothreonine; by autocatalysis. At Ser-315 the chain carries Phosphoserine. Residue Lys-317 is modified to N6-acetyllysine. A phosphoserine mark is found at Ser-318 and Ser-340. The disordered stretch occupies residues 325 to 350 (GVKKRKSSSSVQMMESTESSNTTIED). Residues 332–347 (SSSVQMMESTESSNTT) show a composition bias toward polar residues. Position 341 is a phosphothreonine (Thr-341). The residue at position 343 (Ser-343) is a Phosphoserine. Phosphothreonine is present on residues Thr-346 and Thr-347. Ser-414 carries the post-translational modification Phosphoserine.

It belongs to the protein kinase superfamily. CAMK Ser/Thr protein kinase family. CaMK subfamily. As to quaternary structure, CAMK2 is composed of 4 different chains: alpha (CAMK2A), beta (CAMK2B), gamma (CAMK2G), and delta (CAMK2D). The different isoforms assemble into homo- or heteromultimeric holoenzymes composed of 12 subunits with two hexameric rings stacked one on top of the other. Interacts with RRAD and CACNB2. In terms of processing, autophosphorylation of Thr-287 following activation by Ca(2+)/calmodulin. Phosphorylation of Thr-287 locks the kinase into an activated state.

The protein resides in the cell membrane. It is found in the sarcolemma. It localises to the sarcoplasmic reticulum membrane. It carries out the reaction L-seryl-[protein] + ATP = O-phospho-L-seryl-[protein] + ADP + H(+). The catalysed reaction is L-threonyl-[protein] + ATP = O-phospho-L-threonyl-[protein] + ADP + H(+). With respect to regulation, activated by Ca(2+)/calmodulin. Binding of calmodulin results in conformational change that relieves intrasteric autoinhibition and allows autophosphorylation of Thr-287 which turns the kinase in a constitutively active form and confers to the kinase a Ca(2+)-independent activity. Functionally, calcium/calmodulin-dependent protein kinase involved in the regulation of Ca(2+) homeostatis and excitation-contraction coupling (ECC) in heart by targeting ion channels, transporters and accessory proteins involved in Ca(2+) influx into the myocyte, Ca(2+) release from the sarcoplasmic reticulum (SR), SR Ca(2+) uptake and Na(+) and K(+) channel transport. Targets also transcription factors and signaling molecules to regulate heart function. In its activated form, is involved in the pathogenesis of dilated cardiomyopathy and heart failure. Contributes to cardiac decompensation and heart failure by regulating SR Ca(2+) release via direct phosphorylation of RYR2 Ca(2+) channel on 'Ser-2808'. In the nucleus, phosphorylates the MEF2 repressor HDAC4, promoting its nuclear export and binding to 14-3-3 protein, and expression of MEF2 and genes involved in the hypertrophic program. Is essential for left ventricular remodeling responses to myocardial infarction. In pathological myocardial remodeling acts downstream of the beta adrenergic receptor signaling cascade to regulate key proteins involved in ECC. Regulates Ca(2+) influx to myocytes by binding and phosphorylating the L-type Ca(2+) channel subunit beta-2 CACNB2. In addition to Ca(2+) channels, can target and regulate the cardiac sarcolemmal Na(+) channel Nav1.5/SCN5A and the K+ channel Kv4.3/KCND3, which contribute to arrhythmogenesis in heart failure. Phosphorylates phospholamban (PLN/PLB), an endogenous inhibitor of SERCA2A/ATP2A2, contributing to the enhancement of SR Ca(2+) uptake that may be important in frequency-dependent acceleration of relaxation (FDAR) and maintenance of contractile function during acidosis. May participate in the modulation of skeletal muscle function in response to exercise, by regulating SR Ca(2+) transport through phosphorylation of PLN/PLB and triadin, a ryanodine receptor-coupling factor. In response to interferon-gamma (IFN-gamma) stimulation, catalyzes phosphorylation of STAT1, stimulating the JAK-STAT signaling pathway. The chain is Calcium/calmodulin-dependent protein kinase type II subunit delta (CAMK2D) from Bos taurus (Bovine).